We begin with the raw amino-acid sequence, 392 residues long: F-box only protein 5-A (392 aa).

The disordered stretch occupies residues 1 to 21 (MMCGFASNQSPKKLSSKKSSA). Over residues 7–20 (SNQSPKKLSSKKSS) the composition is skewed to low complexity. The region spanning 197-244 (AELFHRDFKHLLTKILRHLSAMDLINVISVSTTWRKLLQKDNWAYNAY) is the F-box domain. Residues 319–367 (SLKVCVDCGSPAKHDPCLHRAICTRESCKLDFCTRCSCKYHFSKSCLMS) form a ZBR-type zinc finger. Positions 323, 326, 341, 346, 351, 354, 359, and 364 each coordinate Zn(2+).

In terms of assembly, part of a SCF (SKP1-cullin-F-box) protein ligase complex. Interacts with btrc. Interacts with skp1. Interacts with cdc20. Interacts with pin1; stabilizes fbxo5 by preventing its association with btrc in an isomerization-dependent pathway; this interaction is present during G2 phase and prevents fbxo5 degradation. Interacts with plk1. Post-translationally, proteolysed; proteolysis is induced by both cyclin B-cdk1 and cyclin A-cdk1/2 complex through probable phosphorylation. Proteolysis is inhibited by pin1 during G2.

Its subcellular location is the nucleus. It localises to the cytoplasm. The protein localises to the cytoskeleton. The protein resides in the spindle. It is found in the microtubule organizing center. Its subcellular location is the centrosome. It functions in the pathway protein modification; protein ubiquitination. Functionally, regulates progression through early mitosis by inhibiting the anaphase promoting complex/cyclosome (APC). Binds to the APC activator cdc20 to prevent APC activation. Can also bind directly to the APC to inhibit substrate-binding. Required to arrest unfertilized eggs at metaphase of meiosis II, by preventing their release from metaphase of meiosis II, through inhibition of APC-dependent cyclin B destruction leading to stabilization of cyclin B-cdk1 complex activity. This is F-box only protein 5-A (fbxo5-a) from Xenopus laevis (African clawed frog).